The sequence spans 372 residues: Homeobox protein Nkx-2.1 (372 aa).

Positions 161–220 (RRKRRVLFSQAQVYELERRFKQQKYLSAPEREHLASMIHLTPTQVKIWFQNHRYKMKRQA) form a DNA-binding region, homeobox. Disordered stretches follow at residues 219 to 258 (QAKD…SPRR), 269 to 288 (KPCQ…SHAQ), and 312 to 340 (AGLG…SPAG). Gly residues predominate over residues 233–244 (SGGGGGGGGGAG). Over residues 245-254 (CPQQQQAQQQ) the composition is skewed to low complexity. S255 is modified (phosphoserine). The span at 273–288 (AGAPAPGAASLQSHAQ) shows a compositional bias: low complexity.

Belongs to the NK-2 homeobox family. Interacts with WWTR1. In terms of processing, phosphorylated on serine residues by STK3/MST2. In terms of tissue distribution, thyroid, lung and brain.

It is found in the nucleus. Functionally, transcription factor that binds and activates the promoter of thyroid specific genes such as thyroglobulin, thyroperoxidase, and thyrotropin receptor. Crucial in the maintenance of the thyroid differentiation phenotype. May play a role in lung development and surfactant homeostasis. Forms a regulatory loop with GRHL2 that coordinates lung epithelial cell morphogenesis and differentiation. Activates the transcription of GNRHR and plays a role in enhancing the circadian oscillation of its gene expression. Represses the transcription of the circadian transcriptional repressor NR1D1. The chain is Homeobox protein Nkx-2.1 from Mus musculus (Mouse).